A 666-amino-acid polypeptide reads, in one-letter code: Probable potassium transport system protein Kup (666 aa).

The next 12 membrane-spanning stretches (helical) occupy residues 16–36 (GFII…LYTM), 58–78 (ISLI…LIAL), 98–118 (ISPW…SDGA), 141–161 (IYQN…VLFG), 165–185 (FGTG…FSFL), 221–241 (IFIL…YSDL), 253–273 (WPFV…WILA), 299–319 (LATL…FTLI), 343–363 (LYIP…VLAF), 373–393 (YGLA…YYLI), 399–419 (PILA…FFLA), and 424–444 (FMHG…VMFI).

This sequence belongs to the HAK/KUP transporter (TC 2.A.72) family.

It localises to the cell membrane. It catalyses the reaction K(+)(in) + H(+)(in) = K(+)(out) + H(+)(out). In terms of biological role, transport of potassium into the cell. Likely operates as a K(+):H(+) symporter. The protein is Probable potassium transport system protein Kup of Streptococcus pyogenes serotype M28 (strain MGAS6180).